A 635-amino-acid polypeptide reads, in one-letter code: DNA primase (635 aa).

The segment at 41–65 adopts a CHC2-type zinc-finger fold; sequence CPFHDEKSPSFSVSPAKQMYYCFGC. The region spanning 265-348 is the Toprim domain; it reads DEAILVEGYF…SGQVNLRILN (84 aa). Residues glutamate 271, aspartate 317, and aspartate 319 each coordinate Mg(2+).

This sequence belongs to the DnaG primase family. Monomer. Interacts with DnaB. The cofactor is Zn(2+). Mg(2+) is required as a cofactor.

It catalyses the reaction ssDNA + n NTP = ssDNA/pppN(pN)n-1 hybrid + (n-1) diphosphate.. RNA polymerase that catalyzes the synthesis of short RNA molecules used as primers for DNA polymerase during DNA replication. This chain is DNA primase, found in Synechocystis sp. (strain ATCC 27184 / PCC 6803 / Kazusa).